Here is an 88-residue protein sequence, read N- to C-terminus: UPF0250 protein Shewmr4_0986 (88 aa).

The protein belongs to the UPF0250 family.

This chain is UPF0250 protein Shewmr4_0986, found in Shewanella sp. (strain MR-4).